Reading from the N-terminus, the 59-residue chain is Flagellar basal-body rod protein FlgC (59 aa).

It belongs to the flagella basal body rod proteins family. As to quaternary structure, the basal body constitutes a major portion of the flagellar organelle and consists of four rings (L,P,S, and M) mounted on a central rod. The rod consists of about 26 subunits of FlgG in the distal portion, and FlgB, FlgC and FlgF are thought to build up the proximal portion of the rod with about 6 subunits each.

It is found in the bacterial flagellum basal body. The protein is Flagellar basal-body rod protein FlgC (flgC) of Borrelia hermsii.